Reading from the N-terminus, the 425-residue chain is SrfA-induced gene G protein (425 aa).

N-linked (GlcNAc...) asparagine glycosylation is found at Asn25, Asn28, and Asn36. Coiled coils occupy residues 41–91, 172–208, and 292–340; these read RDSE…RIRN, HEKQILEKTLRRHQQEQDNNNNNKKTIENQMERMKRT, and KFGQ…NYNI. Residues 91–113 form a helical membrane-spanning segment; it reads NVFKVLITILVGSIIYGTYTNQF. The interval 393–413 is disordered; the sequence is KKPHADSNGHPKPYPHHHLLN.

Its subcellular location is the membrane. The sequence is that of SrfA-induced gene G protein (sigG) from Dictyostelium discoideum (Social amoeba).